We begin with the raw amino-acid sequence, 214 residues long: Outer-membrane lipoprotein LolB (214 aa).

Residues 1 to 30 form the signal peptide; sequence MKHVSSPHPCAAIASARVWLGLVLVALLAG. Cys-31 is lipidated: N-palmitoyl cysteine. A lipid anchor (S-diacylglycerol cysteine) is attached at Cys-31.

This sequence belongs to the LolB family. In terms of assembly, monomer.

The protein localises to the cell outer membrane. Its function is as follows. Plays a critical role in the incorporation of lipoproteins in the outer membrane after they are released by the LolA protein. The protein is Outer-membrane lipoprotein LolB of Chromohalobacter salexigens (strain ATCC BAA-138 / DSM 3043 / CIP 106854 / NCIMB 13768 / 1H11).